Here is a 238-residue protein sequence, read N- to C-terminus: VIGGDECNINEHNFLVALYEYWSQSFLCGGTLINGEWVLTAAHCDRKHILIYVGVHDRSVQFDKEQRRFPKEKYFFNCRNNFTKWDKDIMLIRLNKPVSYSEHIAPLSLPSSPPIVGSVCRVMGWGTIKSPQETLPDVPHCANINLLDYEVCRTAHPQFRLPATIRILCAGVLEGGIDTCHRDSGGPLICNGEFQGIVSWGDGSCAQPDKPALYSKVFDHLDWIQNIIAGSETVNCPS.

One can recognise a Peptidase S1 domain in the interval 1–229 (VIGGDECNIN…HLDWIQNIIA (229 aa)). Cystine bridges form between Cys7/Cys141, Cys28/Cys44, Cys78/Cys236, Cys120/Cys190, Cys152/Cys169, and Cys180/Cys205. Active-site charge relay system residues include His43 and Asp88. The active-site Charge relay system is the Ser184.

The protein belongs to the peptidase S1 family. Snake venom subfamily. Monomer. As to expression, expressed by the venom gland.

It is found in the secreted. Its activity is regulated as follows. Inhibited by Cu(2+) and, to a lesser extent, by Zn(2+) and Ba(2+). Not inhibited by Ca(2+) and Mg(2+). Functionally, thrombin-like snake venom serine protease. Releases fibrinopeptide A and B in the conversion of fibrinogen to fibrin, with preferential activity on the alpha chain of fibrinogen. Also hydrolyzes N-p-toluensulfonyl arginine ester (TAME) and chromogenic artificial substrates of the blood coagulation cascade: S-2222 for factor Xa, S-2302 for kallikrein and S-2238 for thrombin. When tested in vitro, the recombinant protein does not degrade blood clots, suggesting that this toxin lacks fibrinolytic activity. In addition, it moderately inhibits human Kv10.1/KCNH1/EAG1 currents, with a mechanism independent of its enzymatic activity. It selectively blocks Kv10.1/KCNH1/EAG1 in a time and dose-dependent manner (IC(50)=4.2 uM for native protein and IC(50)=2.5 uM for recombinant protein). It may have a preference in interacting with Kv10.1/KCNH1/EAG1 in its closed state, since the inhibitory effect of the toxin is decreased at more depolarized potentials. Corroboratively, it may have possible antitumor applications, since it reduces the viability of human breast cancer cell line MCF-7, which strongly expresses Kv10.1/KCNH1/EAG1, but does not affect the liver carcinoma and the non-tumorigenic epithelial breast cell lines, which weakly express Kv10.1/KCNH1/EAG1. When tested on peripheral blood mononuclear cells (PBMC), the native protein shows mild cytotoxicity, whereas the recombinant protein does not show any cytotoxicity. Native form is not immununogenic, since it does not induce statistically significant antibody production in mice, whereas recombinant form shows an antibody titer slightly higher than the native form. In vivo, subplantar injection in mice paw induces a discreet paw edema. In addition, intraperitoneal injection of the recombinant protein into mice led to fibrinogen depletion, resulting in the blood incoagulability. In Crotalus durissus collilineatus (Brazilian rattlesnake), this protein is Thrombin-like enzyme collinein-1.